A 493-amino-acid polypeptide reads, in one-letter code: 6-aminohexanoate-cyclic-dimer hydrolase (493 aa).

Residues Lys72 and Ser150 each act as charge relay system in the active site. Ser174 functions as the Acyl-ester intermediate in the catalytic mechanism.

The protein belongs to the amidase family. In terms of assembly, homodimer.

The enzyme catalyses 1,8-diazacyclotetradecane-2,9-dione + H2O = N-(6-aminohexanoyl)-6-aminohexanoate. The protein operates within xenobiotic degradation; nylon-6 oligomer degradation. With respect to regulation, strongly inhibited by 1 uM diisopropylphosphofluoridate and 10 uM p-chloromercuribenzoate but scarcely inhibited by 100 mM EDTA in vitro. Specifically catalyzes the hydrolysis of 6-aminohexanoic acid cyclic dimer (1,8-diazacyclotetradecane-2,9-dione) to form the linear dimer 6-aminohexanoyl-6-aminohexanoic acid. Is inactive on 6-aminohexanoic acid oligomers (degree of polymerization 2 to 6), various other cyclic amides, cyclic diamides, linear amides, oligopeptides, and casein. Allows the bacterium to grow on a medium containing 6-aminohexanoic acid cyclic dimer as the sole carbon and nitrogen sources. The sequence is that of 6-aminohexanoate-cyclic-dimer hydrolase (nylA) from Paenarthrobacter ureafaciens.